The primary structure comprises 392 residues: PMA1 stabilization in the Golgi protein 1 (392 aa).

An N-terminal signal peptide occupies residues 1–22; the sequence is MRFHDSILIFFSLASLYQHVHG. O-linked (Man) threonine glycans are attached at residues T34 and T35. O-linked (Man) serine glycosylation is present at S36. The O-linked (Man) threonine glycan is linked to T45. O-linked (Man) serine glycosylation is present at S49. O-linked (Man) threonine glycans are attached at residues T55, T57, and T63. S65 is a glycosylation site (O-linked (Man) serine). Residue T71 is glycosylated (O-linked (Man) threonine). A glycan (O-linked (Man) serine) is linked at S80. O-linked (Man) threonine glycosylation is found at T89 and T99. S107 carries O-linked (Man) serine glycosylation. O-linked (Man) threonine glycans are attached at residues T108 and T112. S114 and S115 each carry an O-linked (Man) serine glycan. O-linked (Man) threonine glycosylation is present at T117. 2 O-linked (Man) serine glycosylation sites follow: S119 and S148. An O-linked (Man) threonine glycan is attached at T156. O-linked (Man) serine glycosylation occurs at S171. Residue T176 is glycosylated (O-linked (Man) threonine). S181 carries an O-linked (Man) serine glycan. O-linked (Man) threonine glycans are attached at residues T188, T192, T195, and T199. 2 O-linked (Man) serine glycosylation sites follow: S203 and S215. The Lumenal portion of the chain corresponds to 230–317; it reads DIPATFFSSE…DAGITNDQWY (88 aa). Residues 318 to 338 traverse the membrane as a helical segment; sequence YVALSIPTVVVVFFVFMYFFL. Over 339–392 the chain is Cytoplasmic; sequence YVNGKNRDFTDVTRKALNKKRRVLGKFSEMKKFKNMKNHKYTELPSYKKTSKQN.

In terms of assembly, interacts with EXP1. PSG1-N' interacts with ERAD-related proteins involved in PMA1 quality control including EPS1, CDC48, UBX2 and SSM4. PSG1-C' interacts with the TLG1/2 SNARE complex proteins TLG1, TLG2 and VTI1. In terms of processing, the precursor protein is cleaved into two polypeptide chains, PSG1-N' and PSG1-C'. The cleavage is performed in the Golgi apparatus by Ca(+)-dependent serine protease KEX2 between Arg-229 and Asp-230. PSG1-N' is highly O-mannosylated.

The protein resides in the golgi apparatus lumen. Its subcellular location is the cytoplasmic vesicle. The protein localises to the COPI-coated vesicle membrane. In terms of biological role, with EXP1, the specific cargo receptor protein for the plasma membrane ATPase PMA1, is involved in the transport and/or maturation of PMA1. EXP1 and PSG1 probably act sequentially to promote PMA1 sorting between the ER and the Golgi, with EXP1 promoting PMA1 export from the ER to the Golgi while PSG1 has a role in PMA1 maturation or quality control in the Golgi. PSG1 might also couple PMA1 sorting and maturation in the early secretory pathway with the glycosylation machinery. Its function is as follows. PSG1 is cleaved by KEX2 in two stable peptides, PSG1-N' and PSG1-C', the former supporting a role in maturation quality control, the latter having a role in modulating vesicular trafficking. In Saccharomyces cerevisiae (strain ATCC 204508 / S288c) (Baker's yeast), this protein is PMA1 stabilization in the Golgi protein 1.